The primary structure comprises 83 residues: Acyl carrier protein MmaB (83 aa).

In terms of domain architecture, Carrier spans 3 to 83; sequence DPVRQRILLA…LSQSELESPT (81 aa). Position 39 is an O-(pantetheine 4'-phosphoryl)serine (serine 39).

This sequence belongs to the acyl carrier protein (ACP) family. Requires pantetheine 4'-phosphate as cofactor.

It participates in lipid metabolism; fatty acid metabolism. Its function is as follows. Acyl-carrier protein (ACP) involved in the biosynthesis of a unique class of isonitrile lipopeptides (INLPs) that seem to play a role in metal acquisition in M.marinum. Is the dedicated ACP for the loading of activated acyl groups catalyzed by MmaC. The polypeptide is Acyl carrier protein MmaB (Mycobacterium marinum (strain ATCC BAA-535 / M)).